An 88-amino-acid polypeptide reads, in one-letter code: Probable glutaredoxin ssr2061 (88 aa).

C15 and C18 are joined by a disulfide.

Belongs to the glutaredoxin family.

In terms of biological role, has a glutathione-disulfide oxidoreductase activity in the presence of NADPH and glutathione reductase. Reduces low molecular weight disulfides and proteins. This chain is Probable glutaredoxin ssr2061, found in Synechocystis sp. (strain ATCC 27184 / PCC 6803 / Kazusa).